The primary structure comprises 237 residues: ATP synthase subunit a (237 aa).

A run of 5 helical transmembrane segments spans residues 18-38 (LTLL…VYWA), 77-97 (SLFL…GLMA), 114-134 (NIAF…VEGI), 167-187 (LALR…LLVT), and 208-230 (AFSV…MYLG).

This sequence belongs to the ATPase A chain family. F-type ATPases have 2 components, CF(1) - the catalytic core - and CF(0) - the membrane proton channel. CF(1) has five subunits: alpha(3), beta(3), gamma(1), delta(1), epsilon(1). CF(0) has three main subunits: a(1), b(2) and c(9-12). The alpha and beta chains form an alternating ring which encloses part of the gamma chain. CF(1) is attached to CF(0) by a central stalk formed by the gamma and epsilon chains, while a peripheral stalk is formed by the delta and b chains.

It localises to the cell membrane. In terms of biological role, key component of the proton channel; it plays a direct role in the translocation of protons across the membrane. The sequence is that of ATP synthase subunit a from Streptococcus gordonii (strain Challis / ATCC 35105 / BCRC 15272 / CH1 / DL1 / V288).